The chain runs to 274 residues: MLRGGSMTAELGVGFALRAVNERVQQSVARRPRDLPAIQPRLVAVSKTKPADMVIEAYGHGQRTFGENYVQELLEKASNPKILSSCPEIKWHFIGHLQKQNVNKLMAVPNLSMLETVDSVKLADKVNSSWQKKGPTEPLKVMVQINTSGEDSKHGLLPSETIAVVEHIKASCPSLEFVGLMTIGSFGHDLSQGPNPDFQRLLTLRRELCEKLGIPVEQVELSMGMSMDFQHAIEVGSTNVRIGSTIFGERDYSKKPALDKTADAKASVPLVQGH.

The residue at position 6 (S6) is a Phosphoserine. K47 is modified (N6-(pyridoxal phosphate)lysine). At Y69 the chain carries Phosphotyrosine. Residue K125 is modified to N6-succinyllysine. S226 and S244 each carry phosphoserine.

It belongs to the pyridoxal phosphate-binding protein YggS/PROSC family.

Pyridoxal 5'-phosphate (PLP)-binding protein, which may be involved in intracellular homeostatic regulation of pyridoxal 5'-phosphate (PLP), the active form of vitamin B6. The sequence is that of Pyridoxal phosphate homeostasis protein from Mus musculus (Mouse).